Here is a 365-residue protein sequence, read N- to C-terminus: Succinyl-diaminopimelate desuccinylase (365 aa).

Residue H65 coordinates Zn(2+). D67 is a catalytic residue. D96 is a binding site for Zn(2+). E126 acts as the Proton acceptor in catalysis. E127, E155, and H340 together coordinate Zn(2+).

This sequence belongs to the peptidase M20A family. DapE subfamily. As to quaternary structure, homodimer. Requires Zn(2+) as cofactor. Co(2+) serves as cofactor.

It catalyses the reaction N-succinyl-(2S,6S)-2,6-diaminopimelate + H2O = (2S,6S)-2,6-diaminopimelate + succinate. It functions in the pathway amino-acid biosynthesis; L-lysine biosynthesis via DAP pathway; LL-2,6-diaminopimelate from (S)-tetrahydrodipicolinate (succinylase route): step 3/3. Catalyzes the hydrolysis of N-succinyl-L,L-diaminopimelic acid (SDAP), forming succinate and LL-2,6-diaminopimelate (DAP), an intermediate involved in the bacterial biosynthesis of lysine and meso-diaminopimelic acid, an essential component of bacterial cell walls. The sequence is that of Succinyl-diaminopimelate desuccinylase from Campylobacter jejuni subsp. jejuni serotype O:2 (strain ATCC 700819 / NCTC 11168).